Here is a 62-residue protein sequence, read N- to C-terminus: Fungus-induced protein 1 (62 aa).

The N-terminal stretch at 1-22 is a signal peptide; that stretch reads MSQNLFQILLIFAILAALQVQG.

In Caenorhabditis briggsae, this protein is Fungus-induced protein 1.